The primary structure comprises 122 residues: Large ribosomal subunit protein uL14 (122 aa).

It belongs to the universal ribosomal protein uL14 family. In terms of assembly, part of the 50S ribosomal subunit. Forms a cluster with proteins L3 and L19. In the 70S ribosome, L14 and L19 interact and together make contacts with the 16S rRNA in bridges B5 and B8.

Binds to 23S rRNA. Forms part of two intersubunit bridges in the 70S ribosome. In Helicobacter hepaticus (strain ATCC 51449 / 3B1), this protein is Large ribosomal subunit protein uL14.